Here is a 651-residue protein sequence, read N- to C-terminus: Intraflagellar transport protein 70A (651 aa).

7 TPR repeats span residues 8–41, 42–75, 140–173, 175–207, 372–405, 410–443, and 445–478; these read DGEYTATIYRLIKEARYGEAIQVLSNELQKQYRS, RAGLSLLGYCYYQIQDFVNAADCYEQLIQISPEV, PESEINMGCLLYKEGHYEEACKKFITAMQVMGYK, DLSFNIALCYYSMKQYAPALKHIADIIERGIRE, LTEQMRKLTKQVQEARHNRDDEAVKKAVNEYDET, IPVLMAQAKIYWNMENYQMVEKIFRKSVEFCNEH, and IWKLNVAHVLFMQDNKYKEAIGFYEPIVKKHYDN. A coiled-coil region spans residues 494-521; the sequence is YIMTSQNEEAEELMRKIEKEEEQIAYEN. The stretch at 530–563 is one TPR 8 repeat; sequence CIVNLVIGTLYCAKGNYEFGISRVIKSLEPYNKK.

The protein belongs to the TTC30/dfy-1/fleer family.

It is found in the cell projection. Its subcellular location is the cilium. Required for polyglutamylation of axonemal tubulin. Plays a role in anterograde intraflagellar transport (IFT), the process by which cilia precursors are transported from the base of the cilium to the site of their incorporation at the tip. In Xenopus laevis (African clawed frog), this protein is Intraflagellar transport protein 70A (ift70a).